The sequence spans 288 residues: Bifunctional protein FolD (288 aa).

NADP(+)-binding positions include 164–166, S193, and I234; that span reads GRS.

It belongs to the tetrahydrofolate dehydrogenase/cyclohydrolase family. In terms of assembly, homodimer.

It catalyses the reaction (6R)-5,10-methylene-5,6,7,8-tetrahydrofolate + NADP(+) = (6R)-5,10-methenyltetrahydrofolate + NADPH. It carries out the reaction (6R)-5,10-methenyltetrahydrofolate + H2O = (6R)-10-formyltetrahydrofolate + H(+). It participates in one-carbon metabolism; tetrahydrofolate interconversion. Functionally, catalyzes the oxidation of 5,10-methylenetetrahydrofolate to 5,10-methenyltetrahydrofolate and then the hydrolysis of 5,10-methenyltetrahydrofolate to 10-formyltetrahydrofolate. This chain is Bifunctional protein FolD, found in Nitratidesulfovibrio vulgaris (strain DSM 19637 / Miyazaki F) (Desulfovibrio vulgaris).